A 110-amino-acid polypeptide reads, in one-letter code: U9-agatoxin-Ao1a (110 aa).

An N-terminal signal peptide occupies residues Met-1–Ala-17. Residues Glu-18–Arg-38 constitute a propeptide that is removed on maturation. 5 cysteine pairs are disulfide-bonded: Cys-40/Cys-54, Cys-47/Cys-60, Cys-51/Cys-87, Cys-53/Cys-72, and Cys-62/Cys-70.

It belongs to the neurotoxin 37 family. In terms of tissue distribution, expressed by the venom gland.

Its subcellular location is the secreted. This chain is U9-agatoxin-Ao1a, found in Agelena orientalis (Funnel-web spider).